We begin with the raw amino-acid sequence, 1560 residues long: BRD4-interacting chromatin-remodeling complex-associated protein (1560 aa).

Disordered stretches follow at residues 53–99 (VQEA…GADQ), 624–688 (APQA…ATPT), 723–949 (IVSA…VTTP), 974–1028 (NKAG…TGLP), 1049–1075 (KAAS…KPPT), and 1215–1300 (SSEG…IKTY). Residues 86–96 (ATGGGGGGSGG) are compositionally biased toward gly residues. Residues 624 to 664 (APQAPPAVSTPLPLGLQQPQAQQPPQAPTPQAAAPPQATTP) show a composition bias toward low complexity. The segment covering 726 to 736 (APPPAQDPAPA) has biased composition (pro residues). Residues 747 to 780 (PQAPDSQASPAPAPQIPAAAPLKGPGPSSSPSLP) show a composition bias toward low complexity. Composition is skewed to pro residues over residues 791 to 806 (LPSP…PPSR), 814 to 831 (PSEP…PPTL), and 843 to 880 (VPPP…PHLP). Residues 881-896 (PSSTSSAVASSSETSS) show a composition bias toward low complexity. Phosphoserine is present on S919. T921 is subject to Phosphothreonine. Residues 932-941 (PAAPPPPPPR) are compositionally biased toward pro residues. Positions 1005–1028 (APSGTPTAPSHAPAPAPMAATGLP) are enriched in low complexity. K1057 carries the N6-acetyllysine modification. A compositionally biased stretch (polar residues) spans 1227–1236 (LSSSAPGAST). Residues 1264 to 1281 (ASSSLSSSSSSSSAASSL) are compositionally biased toward low complexity. K1313 participates in a covalent cross-link: Glycyl lysine isopeptide (Lys-Gly) (interchain with G-Cter in SUMO2). Disordered regions lie at residues 1324 to 1424 (NTAL…VDEA) and 1440 to 1560 (YQRM…TLTR). Over residues 1331-1356 (HQPPPPPATLKVAEPPPRPPPPPPPT) the composition is skewed to pro residues. Residues 1401-1412 (PEGTPAGRARGG) are compositionally biased toward low complexity. S1413 is subject to Phosphoserine. Residues 1485 to 1515 (ASFSSDSPQDDTLTEHLQSAIDSILNLQQAP) show a composition bias toward polar residues.

As to quaternary structure, component of the multiprotein chromatin-remodeling complexes SWI/SNF: SWI/SNF-A (BAF), SWI/SNF-B (PBAF) and related complexes. The canonical complex contains a catalytic subunit (either SMARCA4/BRG1/BAF190A or SMARCA2/BRM/BAF190B) and at least SMARCE1, ACTL6A/BAF53, SMARCC1/BAF155, SMARCC2/BAF170, and SMARCB1/SNF5/BAF47. Other subunits specific to each of the complexes may also be present permitting several possible combinations developmentally and tissue specific. Component of the SWI/SNF (GBAF) subcomplex, which includes at least BICRA or BICRAL (mutually exclusive), BRD9, SS18, the core BAF subunits, SMARCA2/BRM, SMARCA4/BRG1/BAF190A, ACTL6A/BAF53, SMARCC1/BAF155, and SMARCD1/BAF60A. Interacts with BRD4; the interaction bridges BRD4 to the GBAF complex. Expressed at moderate levels in heart, brain, placenta, skeletal muscle, and pancreas, and at lower levels in lung, liver and kidney.

The protein resides in the nucleus. Component of SWI/SNF chromatin remodeling subcomplex GBAF that carries out key enzymatic activities, changing chromatin structure by altering DNA-histone contacts within a nucleosome in an ATP-dependent manner. May play a role in BRD4-mediated gene transcription. The sequence is that of BRD4-interacting chromatin-remodeling complex-associated protein from Homo sapiens (Human).